A 227-amino-acid chain; its full sequence is Cytochrome c oxidase subunit 2 (227 aa).

Residues 1-14 (MAYPFELGFQDATS) lie on the Mitochondrial intermembrane side of the membrane. The helical transmembrane segment at 15-45 (PIMEELLHFHDHTLMIVFLISSLVLYIISLM) threads the bilayer. The Mitochondrial matrix segment spans residues 46–59 (LTTKLTHTSTMDAQ). A helical membrane pass occupies residues 60–87 (EVETIWTILPAIILILIALPSLRVLYMM). Residues 88–227 (DEINDPSLTV…HFENWSSSML (140 aa)) lie on the Mitochondrial intermembrane side of the membrane. Residues histidine 161, cysteine 196, glutamate 198, cysteine 200, histidine 204, and methionine 207 each coordinate Cu cation. Glutamate 198 provides a ligand contact to Mg(2+).

The protein belongs to the cytochrome c oxidase subunit 2 family. As to quaternary structure, component of the cytochrome c oxidase (complex IV, CIV), a multisubunit enzyme composed of 14 subunits. The complex is composed of a catalytic core of 3 subunits MT-CO1, MT-CO2 and MT-CO3, encoded in the mitochondrial DNA, and 11 supernumerary subunits COX4I, COX5A, COX5B, COX6A, COX6B, COX6C, COX7A, COX7B, COX7C, COX8 and NDUFA4, which are encoded in the nuclear genome. The complex exists as a monomer or a dimer and forms supercomplexes (SCs) in the inner mitochondrial membrane with NADH-ubiquinone oxidoreductase (complex I, CI) and ubiquinol-cytochrome c oxidoreductase (cytochrome b-c1 complex, complex III, CIII), resulting in different assemblies (supercomplex SCI(1)III(2)IV(1) and megacomplex MCI(2)III(2)IV(2)). Found in a complex with TMEM177, COA6, COX18, COX20, SCO1 and SCO2. Interacts with TMEM177 in a COX20-dependent manner. Interacts with COX20. Interacts with COX16. Requires Cu cation as cofactor.

Its subcellular location is the mitochondrion inner membrane. The catalysed reaction is 4 Fe(II)-[cytochrome c] + O2 + 8 H(+)(in) = 4 Fe(III)-[cytochrome c] + 2 H2O + 4 H(+)(out). In terms of biological role, component of the cytochrome c oxidase, the last enzyme in the mitochondrial electron transport chain which drives oxidative phosphorylation. The respiratory chain contains 3 multisubunit complexes succinate dehydrogenase (complex II, CII), ubiquinol-cytochrome c oxidoreductase (cytochrome b-c1 complex, complex III, CIII) and cytochrome c oxidase (complex IV, CIV), that cooperate to transfer electrons derived from NADH and succinate to molecular oxygen, creating an electrochemical gradient over the inner membrane that drives transmembrane transport and the ATP synthase. Cytochrome c oxidase is the component of the respiratory chain that catalyzes the reduction of oxygen to water. Electrons originating from reduced cytochrome c in the intermembrane space (IMS) are transferred via the dinuclear copper A center (CU(A)) of subunit 2 and heme A of subunit 1 to the active site in subunit 1, a binuclear center (BNC) formed by heme A3 and copper B (CU(B)). The BNC reduces molecular oxygen to 2 water molecules using 4 electrons from cytochrome c in the IMS and 4 protons from the mitochondrial matrix. The polypeptide is Cytochrome c oxidase subunit 2 (MT-CO2) (Sciurus carolinensis (Eastern gray squirrel)).